A 218-amino-acid polypeptide reads, in one-letter code: CTD kinase subunit gamma (218 aa).

A CID domain is found at 2-138; sequence DPFEGRMTFL…DAMATVEAHE (137 aa). Residues 137-157 are disordered; that stretch reads HEQASKSGDTSTSGAISKNDI. Positions 141 to 152 are enriched in polar residues; that stretch reads SKSGDTSTSGAI.

Belongs to the CTK3 family. CTDK-I consists of three subunits, ctk1/lsk1, ctk2/lsc1 and ctk3 (also called alpha, beta and gamma).

Its subcellular location is the cytoplasm. It localises to the nucleus. In terms of biological role, subunit of the CTDK-I complex, which hyperphosphorylates the C-terminal heptapeptide repeat domain (CTD) of the largest RNA polymerase II subunit. As part of the CTDK-I complex, involved in RNA polymerase II transcriptional elongation and pre-mRNA 3'-end processing. Together with ctk2, required for ctk1/lsk1 CTD kinase activation. The chain is CTD kinase subunit gamma from Schizosaccharomyces pombe (strain 972 / ATCC 24843) (Fission yeast).